A 157-amino-acid chain; its full sequence is ADP-ribosylation factor-like protein 2-binding protein (157 aa).

This sequence belongs to the ARL2BP family.

It localises to the cytoplasm. It is found in the mitochondrion intermembrane space. Its subcellular location is the cytoskeleton. The protein localises to the microtubule organizing center. The protein resides in the centrosome. It localises to the nucleus. It is found in the spindle. Its subcellular location is the cilium basal body. Functionally, plays a role as an effector of the ADP-ribosylation factor-like protein 2, ARL2. The protein is ADP-ribosylation factor-like protein 2-binding protein (arl2bp) of Xenopus tropicalis (Western clawed frog).